The primary structure comprises 261 residues: Troponin T, slow skeletal muscle (261 aa).

Over residues 1-30 the composition is skewed to acidic residues; sequence MSDTEEQEYEEEQAEDEEAVEEEAPEEPEP. 2 disordered regions span residues 1 to 61 and 108 to 152; these read MSDT…ERVD and ERAE…KKKV. Residue S2 is modified to Phosphoserine; by CK2. Basic and acidic residues predominate over residues 31–40; that stretch reads VAEREEERPK. Over residues 42-54 the composition is skewed to pro residues; it reads SRPVVPPLIPPKI. The span at 108-148 shows a compositional bias: basic and acidic residues; that stretch reads ERAEQQRFRTEKERERQAKLAEEKMRKEEEEAKKRAEDDAK.

It belongs to the troponin T family. In terms of assembly, interacts with TPM3. Expressed in soleus muscle. Isoform 4 is predominantly expressed in fast muscles.

Functionally, troponin T is the tropomyosin-binding subunit of troponin, the thin filament regulatory complex which confers calcium-sensitivity to striated muscle actomyosin ATPase activity. The protein is Troponin T, slow skeletal muscle (Tnnt1) of Rattus norvegicus (Rat).